Reading from the N-terminus, the 416-residue chain is Squalene synthase (416 aa).

The NADP(+) site is built by Arg-52 and Arg-77. 3 residues coordinate Mg(2+): Asp-80, Glu-83, and Asp-84. Arg-218 contacts NADP(+). Residues 284–304 traverse the membrane as a helical segment; sequence SVFNFCAIPQVMAIATLAACY. NADP(+) contacts are provided by Lys-315 and Arg-317. Residues 384 to 404 form a helical membrane-spanning segment; it reads PIYLSFIMLLAALSWQYLSTL.

Belongs to the phytoene/squalene synthase family. Mg(2+) is required as a cofactor.

The protein localises to the endoplasmic reticulum membrane. It catalyses the reaction 2 (2E,6E)-farnesyl diphosphate + NADPH + H(+) = squalene + 2 diphosphate + NADP(+). The catalysed reaction is 2 (2E,6E)-farnesyl diphosphate + NADH + H(+) = squalene + 2 diphosphate + NAD(+). The enzyme catalyses presqualene diphosphate + NADH + H(+) = squalene + diphosphate + NAD(+). It carries out the reaction presqualene diphosphate + NADPH + H(+) = squalene + diphosphate + NADP(+). It catalyses the reaction 2 (2E,6E)-farnesyl diphosphate = presqualene diphosphate + diphosphate. It participates in terpene metabolism; lanosterol biosynthesis; lanosterol from farnesyl diphosphate: step 1/3. Catalyzes the condensation of 2 farnesyl pyrophosphate (FPP) moieties to form squalene. Proceeds in two distinct steps. In the first half-reaction, two molecules of FPP react to form the stable presqualene diphosphate intermediate (PSQPP), with concomitant release of a proton and a molecule of inorganic diphosphate. In the second half-reaction, PSQPP undergoes heterolysis, isomerization, and reduction with NADPH or NADH to form squalene. It is the first committed enzyme of the sterol biosynthesis pathway. The polypeptide is Squalene synthase (Fdft1) (Mus musculus (Mouse)).